The primary structure comprises 220 residues: Ribonuclease HII (220 aa).

An RNase H type-2 domain is found at 32-220; it reads KHIAGIDEAG…FAPIKGRFDC (189 aa). A divalent metal cation is bound by residues D38, E39, and D130.

The protein belongs to the RNase HII family. It depends on Mn(2+) as a cofactor. The cofactor is Mg(2+).

The protein localises to the cytoplasm. It catalyses the reaction Endonucleolytic cleavage to 5'-phosphomonoester.. Functionally, endonuclease that specifically degrades the RNA of RNA-DNA hybrids. This chain is Ribonuclease HII, found in Brucella suis (strain ATCC 23445 / NCTC 10510).